Consider the following 260-residue polypeptide: Type II methyltransferase M1.MboII (260 aa).

S-adenosyl-L-methionine is bound by residues cysteine 12, aspartate 30, lysine 197, 223–225, and 241–242; these read SGT and DM.

Belongs to the N(4)/N(6)-methyltransferase family. In terms of assembly, at low concentration exists as a monomer and homodimer. Probably binds to DNA as a monomer.

The enzyme catalyses a 2'-deoxyadenosine in DNA + S-adenosyl-L-methionine = an N(6)-methyl-2'-deoxyadenosine in DNA + S-adenosyl-L-homocysteine + H(+). A beta subtype methylase that recognizes the double-stranded sequence 5'-GAAGA-3', methylates A-5 on the top strand, and protects the DNA from cleavage by the MboII endonuclease. It is not known if the cytosine of the complementary sequence TCTTC is also methylated by this enzyme. The polypeptide is Type II methyltransferase M1.MboII (Moraxella bovis).